The primary structure comprises 456 residues: Argininosuccinate lyase (456 aa).

This sequence belongs to the lyase 1 family. Argininosuccinate lyase subfamily.

The protein localises to the cytoplasm. It carries out the reaction 2-(N(omega)-L-arginino)succinate = fumarate + L-arginine. It participates in amino-acid biosynthesis; L-arginine biosynthesis; L-arginine from L-ornithine and carbamoyl phosphate: step 3/3. This Listeria monocytogenes serotype 4b (strain CLIP80459) protein is Argininosuccinate lyase.